We begin with the raw amino-acid sequence, 485 residues long: MLNKLTHGVFTYRASLTAMLSSSTSAGLSSSFVSSRFLSSGIFSSGASRNRVTFPVQFHRASAVRCFASSGGSDRIQVQNPIVEMDGDEMTRVIWSMIKEKLILPYLDLDIKYFDLGILNRDATDDKVTVESAEAALKYNVAIKCATITPDEGRVKEFGLKSMWRSPNGTIRNILDGTVFREPIMCSNIPRLVPGWEKPICIGRHAFGDQYRATDTVIKGPGKLKMVFVPEDGNAPVELDVYDFKGPGVALAMYNVDESIRAFAESSMAMALTKKWPLYLSTKNTILKKYDGRFKDIFQEVYEANWKQKFEEHSIWYEHRLIDDMVAYAVKSEGGYVWACKNYDGDVQSDLLAQGFGSLGLMTSVLLSADGKTLESEAAHGTVTRHFRLHQKGQETSTNSIASIFAWTRGLEHRAKLDKNEKLMDFVKKLESSCVNTVETGKMTKDLALLIHGPKVSRDLFLNTEEFIDAVASKLKTQFKELPLV.

The transit peptide at 1–65 (MLNKLTHGVF…VQFHRASAVR (65 aa)) directs the protein to the chloroplast and mitochondrion. NADP(+) is bound by residues 147-149 (TIT) and arginine 154. Threonine 149 is a substrate binding site. Residues 166 to 172 (SPNGTIR), arginine 181, and arginine 204 contribute to the substrate site. Aspartate 323 contacts Mn(2+). Lysine 331 provides a ligand contact to NADP(+). Residue aspartate 346 participates in Mn(2+) binding. Residues 381 to 386 (GTVTRH) and asparagine 399 each bind NADP(+).

Belongs to the isocitrate and isopropylmalate dehydrogenases family. It depends on Mg(2+) as a cofactor. Requires Mn(2+) as cofactor.

It localises to the plastid. The protein localises to the chloroplast. Its subcellular location is the mitochondrion. It carries out the reaction D-threo-isocitrate + NADP(+) = 2-oxoglutarate + CO2 + NADPH. Functionally, may be involved in response to oxidative stresses. The polypeptide is Isocitrate dehydrogenase [NADP], chloroplastic/mitochondrial (Arabidopsis thaliana (Mouse-ear cress)).